Here is a 610-residue protein sequence, read N- to C-terminus: Butyryl-CoA dehydrogenase Swol_1933 (610 aa).

Glu-451 acts as the Proton acceptor in catalysis.

It belongs to the acyl-CoA dehydrogenase family. Requires FAD as cofactor.

The protein localises to the cytoplasm. It catalyses the reaction butanoyl-CoA + oxidized [electron-transfer flavoprotein] + H(+) = (2E)-butenoyl-CoA + reduced [electron-transfer flavoprotein]. The catalysed reaction is a short-chain 2,3-saturated fatty acyl-CoA + oxidized [electron-transfer flavoprotein] + H(+) = a short-chain (2E)-enoyl-CoA + reduced [electron-transfer flavoprotein]. The protein operates within lipid metabolism; butanoate metabolism. Functionally, involved in syntrophic growth of S.wolfei with butyrate, as part of the butyrate oxidation pathway. Catalyzes the oxidation of butanoyl-CoA to crotonyl-CoA. Probably passes the electrons released by this reaction on to electron-transfer flavoproteins (EtfAB) to finally generate hydrogen and/or formate. This is Butyryl-CoA dehydrogenase Swol_1933 from Syntrophomonas wolfei subsp. wolfei (strain DSM 2245B / Goettingen).